The sequence spans 86 residues: Small ribosomal subunit protein bS16 (86 aa).

It belongs to the bacterial ribosomal protein bS16 family.

The sequence is that of Small ribosomal subunit protein bS16 from Hamiltonella defensa subsp. Acyrthosiphon pisum (strain 5AT).